A 321-amino-acid chain; its full sequence is Triplex capsid protein 2 (321 aa).

The protein belongs to the herpesviridae TRX2 protein family. Interacts with TRX1 and major capisd protein/MCP.

Its subcellular location is the virion. The protein resides in the host nucleus. Its function is as follows. Structural component of the T=16 icosahedral capsid. The capsid is composed of pentamers and hexamers of major capsid protein/MCP, which are linked together by heterotrimers called triplexes. These triplexes are formed by a single molecule of triplex protein 1/TRX1 and two copies of triplex protein 2/TRX2. Additionally, TRX1 is required for efficient transport of TRX2 to the nucleus, which is the site of capsid assembly. This Amazona oratrix (yellow-headed parrot) protein is Triplex capsid protein 2.